The following is a 530-amino-acid chain: Membrane-associated transporter protein (530 aa).

Residues 1–45 (MSGSNGPTDTHTYQSLAEDCPFGSVEQPKRSTGRLVMHSMAMFGR) lie on the Cytoplasmic side of the membrane. The helical transmembrane segment at 46–66 (EFCYAVEAAYVTPVLLSVGLP) threads the bilayer. Topologically, residues 67–68 (KS) are extracellular. The helical transmembrane segment at 69-89 (LYSMVWLLSPILGFLLQPVVG) threads the bilayer. The Cytoplasmic portion of the chain corresponds to 90 to 105 (SASDHCRARWGRRRPY). A helical membrane pass occupies residues 106 to 126 (ILTLAIMMLLGMALYLNGDAV). At 127–138 (VSALVANPRQKL) the chain is on the extracellular side. Residues 139-159 (IWAISITMVGVVLFDFSADFI) traverse the membrane as a helical segment. Residues 160 to 184 (DGPIKAYLFDVCSHQDKEKGLHYHA) are Cytoplasmic-facing. Residues 185–205 (LFTGFGGALGYILGAIDWVHL) traverse the membrane as a helical segment. The Extracellular segment spans residues 206–216 (DLGRLLGTEFQ). Residues 217-237 (VMFFFSALVLILCFITHLCSI) traverse the membrane as a helical segment. The Cytoplasmic portion of the chain corresponds to 238-318 (PEAPLRDAAT…ALVNMPSHYR (81 aa)). The segment at 275 to 299 (KNGGADTEQPVQEWKNKKPSGQSQR) is disordered. Residues 319–339 (CLCVSHLIGWTAFLSNMLFFT) form a helical membrane-spanning segment. Residues 340–366 (DFMGQIVYHGDPYGAHNSTEFLIYERG) are Extracellular-facing. The N-linked (GlcNAc...) asparagine glycan is linked to asparagine 356. A helical membrane pass occupies residues 367–387 (VEVGCWGLCINSVFSSVYSYF). Topologically, residues 388-398 (QKAMVSYIGLK) are cytoplasmic. The helical transmembrane segment at 399–419 (GLYFMGYLLFGLGTGFIGLFP) threads the bilayer. The Extracellular segment spans residues 420–425 (NVYSTL). The chain crosses the membrane as a helical span at residues 426 to 446 (VLCSMFGVMSSTLYTVPFNLI). Residues 447-477 (AEYHREEEKEKGQEAPGGPDNQGRGKGVDCA) lie on the Cytoplasmic side of the membrane. A helical transmembrane segment spans residues 478-498 (ALTCMVQLAQILVGGGLGFLV). Residues 499-504 (NMAGSV) lie on the Extracellular side of the membrane. A helical transmembrane segment spans residues 505-525 (VVVVITASAVSLIGCCFVALF). Topologically, residues 526–530 (VRYVD) are cytoplasmic.

This sequence belongs to the glycoside-pentoside-hexuronide (GPH) cation symporter transporter (TC 2.A.2) family. In terms of assembly, interacts with TYRP1. Mainly expressed in eyeballs and skin melanocytes. Also detected in kidney, colon, gall bladder and pancreas.

It localises to the melanosome membrane. It catalyses the reaction sucrose(out) + H(+)(out) = sucrose(in) + H(+)(in). It carries out the reaction D-glucose(out) + H(+)(out) = D-glucose(in) + H(+)(in). In terms of biological role, proton-associated glucose and sucrose transporter. May be able to transport also fructose. Expressed at a late melanosome maturation stage where functions as a proton/glucose exporter which increase lumenal pH by decreasing glycolysis. Regulates melanogenesis by maintaining melanosome neutralization that is initially initiated by transient OCA2 and required for a proper function of the tyrosinase TYR. The sequence is that of Membrane-associated transporter protein (Slc45a2) from Mus musculus (Mouse).